The chain runs to 449 residues: tRNA modification GTPase MnmE (449 aa).

The (6S)-5-formyl-5,6,7,8-tetrahydrofolate site is built by R24, E85, and R124. The region spanning 220-369 is the TrmE-type G domain; the sequence is GIRTAIAGPP…LEEAIIQAFS (150 aa). K(+) is bound at residue N230. GTP-binding positions include 230–235, 249–255, and 274–277; these read NVGKSS, SNIAGTT, and DTAG. S234 is a Mg(2+) binding site. S249, I251, and T254 together coordinate K(+). Position 255 (T255) interacts with Mg(2+). Residue K449 participates in (6S)-5-formyl-5,6,7,8-tetrahydrofolate binding.

This sequence belongs to the TRAFAC class TrmE-Era-EngA-EngB-Septin-like GTPase superfamily. TrmE GTPase family. In terms of assembly, homodimer. Heterotetramer of two MnmE and two MnmG subunits. The cofactor is K(+).

It is found in the cytoplasm. In terms of biological role, exhibits a very high intrinsic GTPase hydrolysis rate. Involved in the addition of a carboxymethylaminomethyl (cmnm) group at the wobble position (U34) of certain tRNAs, forming tRNA-cmnm(5)s(2)U34. The sequence is that of tRNA modification GTPase MnmE from Akkermansia muciniphila (strain ATCC BAA-835 / DSM 22959 / JCM 33894 / BCRC 81048 / CCUG 64013 / CIP 107961 / Muc).